The following is a 372-amino-acid chain: Glutamate 5-kinase (372 aa).

An ATP-binding site is contributed by K14. The substrate site is built by S54, D141, and N153. Residues T173–D174 and T215–K221 each bind ATP. The region spanning R280–D358 is the PUA domain.

It belongs to the glutamate 5-kinase family.

The protein resides in the cytoplasm. It carries out the reaction L-glutamate + ATP = L-glutamyl 5-phosphate + ADP. Its pathway is amino-acid biosynthesis; L-proline biosynthesis; L-glutamate 5-semialdehyde from L-glutamate: step 1/2. Its function is as follows. Catalyzes the transfer of a phosphate group to glutamate to form L-glutamate 5-phosphate. The sequence is that of Glutamate 5-kinase from Shewanella pealeana (strain ATCC 700345 / ANG-SQ1).